The sequence spans 472 residues: E1B 55 kDa protein (472 aa).

Residues Met-1 to Glu-90 are disordered. Over residues Arg-32–Ser-44 the composition is skewed to low complexity. Residues Ser-45–Glu-57 are compositionally biased toward gly residues. Phosphoserine is present on residues Ser-468 and Ser-469.

It belongs to the adenoviridae E1B 55 kDa protein family. In terms of assembly, interacts with host PML-4 and PML-5; this interaction promotes efficient subnuclear targeting of E1B-55K to PML nuclear bodies. Interacts with E4-ORF3 protein. Interacts with E4-ORF6 protein.

It is found in the host nucleus. It localises to the host cytoplasm. Its function is as follows. Plays a major role to prevent cellular inhibition of viral genome replication. Assembles an SCF-like E3 ubiquitin ligase complex based on the cellular proteins ELOB, ELOC, CUL5 and RBX1, in cooperation with viral E4orf6. This viral RING-type ligase ubiquitinates cellular substrates and targets them to proteasomal degradation: TP53/p53, LIG4, MRE11-RAD50-NBS1 (MRN) complex, ITGA3, DAXX and BLM. E1B-55K probably acts as the substrate-specific adapter of the SCF-like E3 ubiquitin ligase complex. Degradation of host TP53/p53 activity is essential for preventing E1A-induced TP53 accumulation that would otherwise lead to cell apoptosis and growth arrest. E1B-55K also inactivates TP53 transcription-factor activity by binding its transactivation domain. E1B-55K also functions as a SUMO1 E3 ligase for TP53 which causes the latter to be sequestered in promyelocytic leukemia (PML) nuclear bodies thereby contributing to maximal inhibition of TP53 function. This chain is E1B 55 kDa protein, found in Homo sapiens (Human).